The primary structure comprises 141 residues: 16 kDa protein (141 aa).

Residues 95 to 116 (ESSSATRKKSHNSKNSKKKFKE) form a disordered region. The span at 100-113 (TRKKSHNSKNSKKK) shows a compositional bias: basic residues.

This chain is 16 kDa protein, found in Tobacco rattle virus (strain PSG).